The following is a 120-amino-acid chain: Spermidine export protein MdtJ (120 aa).

The next 4 membrane-spanning stretches (helical) occupy residues 1 to 21 (MFYW…TLSM), 31 to 51 (AGFI…SFAV), 54 to 74 (IALG…ITIF), and 81 to 101 (EALS…IVLI).

The protein belongs to the drug/metabolite transporter (DMT) superfamily. Small multidrug resistance (SMR) (TC 2.A.7.1) family. MdtJ subfamily. As to quaternary structure, forms a complex with MdtI.

The protein localises to the cell inner membrane. Functionally, catalyzes the excretion of spermidine. The sequence is that of Spermidine export protein MdtJ from Salmonella choleraesuis (strain SC-B67).